A 434-amino-acid polypeptide reads, in one-letter code: Protein TolB homolog (434 aa).

An N-terminal signal peptide occupies residues 1-27 (MRSTRNSFACLCIMLFGMLFVPFTLRA). The interval 413–434 (SNQRPLLNMQGEQQQPSWSVSK) is disordered.

This sequence belongs to the TolB family.

The protein localises to the periplasm. In Chlorobaculum tepidum (strain ATCC 49652 / DSM 12025 / NBRC 103806 / TLS) (Chlorobium tepidum), this protein is Protein TolB homolog.